The primary structure comprises 606 residues: Elongation factor 4 (606 aa).

The tr-type G domain maps to glutamate 10–lysine 192. GTP contacts are provided by residues aspartate 22–threonine 27 and asparagine 139–aspartate 142.

It belongs to the TRAFAC class translation factor GTPase superfamily. Classic translation factor GTPase family. LepA subfamily.

It is found in the cell membrane. The enzyme catalyses GTP + H2O = GDP + phosphate + H(+). Required for accurate and efficient protein synthesis under certain stress conditions. May act as a fidelity factor of the translation reaction, by catalyzing a one-codon backward translocation of tRNAs on improperly translocated ribosomes. Back-translocation proceeds from a post-translocation (POST) complex to a pre-translocation (PRE) complex, thus giving elongation factor G a second chance to translocate the tRNAs correctly. Binds to ribosomes in a GTP-dependent manner. The protein is Elongation factor 4 of Lawsonia intracellularis (strain PHE/MN1-00).